Reading from the N-terminus, the 256-residue chain is UPF0246 protein TERTU_4575 (256 aa).

The protein belongs to the UPF0246 family.

The chain is UPF0246 protein TERTU_4575 from Teredinibacter turnerae (strain ATCC 39867 / T7901).